Here is a 63-residue protein sequence, read N- to C-terminus: Conotoxin PnMRCL-0111 (63 aa).

Positions 1–22 are cleaved as a signal peptide; it reads MHCLSVFVILLLLTASAPSVDA. A propeptide spanning residues 23-50 is cleaved from the precursor; it reads QPKTEDDVPLSSFHDDLQRTVRTLLDIR. Trp-62 bears the Tryptophan amide mark.

Belongs to the conotoxin T superfamily. Post-translationally, contains 2 disulfide bonds that can be either 'C1-C3, C2-C4' or 'C1-C4, C2-C3', since these disulfide connectivities have been observed for conotoxins with cysteine framework V (for examples, see AC P0DQQ7 and AC P81755). In terms of tissue distribution, expressed by the venom duct.

The protein localises to the secreted. The protein is Conotoxin PnMRCL-0111 of Conus pennaceus (Feathered cone).